The sequence spans 361 residues: D-alanine--D-alanine ligase (361 aa).

Residues 134–344 form the ATP-grasp domain; sequence KLLLKSFDIP…FKDLVDNLID (211 aa). 167-222 contributes to the ATP binding site; it reads KEVLGYPVIVKPAVLGSSIGINVAYSENQIESFIKEALKYDLTIVIEKFIEAREIE. Residues D297, E311, and N313 each contribute to the Mg(2+) site.

This sequence belongs to the D-alanine--D-alanine ligase family. Mg(2+) is required as a cofactor. The cofactor is Mn(2+).

It localises to the cytoplasm. It carries out the reaction 2 D-alanine + ATP = D-alanyl-D-alanine + ADP + phosphate + H(+). The protein operates within cell wall biogenesis; peptidoglycan biosynthesis. In terms of biological role, cell wall formation. The chain is D-alanine--D-alanine ligase from Borreliella burgdorferi (strain ZS7) (Borrelia burgdorferi).